Reading from the N-terminus, the 239-residue chain is SkfA peptide export ATP-binding protein SkfE (239 aa).

One can recognise an ABC transporter domain in the interval 4–232 (MQVQNLSKCY…AEWRKEVIRL (229 aa)). 36 to 43 (GPNGAGKT) contacts ATP.

It belongs to the ABC transporter superfamily. SkfA peptide export (TC 3.A.1.128.1) family.

It is found in the cell membrane. The enzyme catalyses sulfate(out) + ATP + H2O = sulfate(in) + ADP + phosphate + H(+). The catalysed reaction is thiosulfate(out) + ATP + H2O = thiosulfate(in) + ADP + phosphate + H(+). In terms of biological role, probably part of the ABC transporter SkfEF involved in the export of the bacteriocin SKF. Probably responsible for energy coupling to the transport system. In Bacillus subtilis (strain 168), this protein is SkfA peptide export ATP-binding protein SkfE.